The sequence spans 591 residues: Transcriptional regulator PUL4 (591 aa).

Residues 3–29 constitute a DNA-binding region (zn(2)-C6 fungal-type); it reads CLECKKRKQKCDGQKPCRRCTKLNVKC.

Its subcellular location is the nucleus. Its function is as follows. Transcription factor involved in regulation of the PUL gene cluster that mediates the formation of pulcherrimin, a red iron-containing pigment composed of two cyclized and modified leucine molecules that acts as a siderophore, a chelator that binds iron outside the cell for subsequent uptake. The chain is Transcriptional regulator PUL4 from Kluyveromyces lactis (strain ATCC 8585 / CBS 2359 / DSM 70799 / NBRC 1267 / NRRL Y-1140 / WM37) (Yeast).